A 344-amino-acid chain; its full sequence is Heat-inducible transcription repressor HrcA (344 aa).

This sequence belongs to the HrcA family.

In terms of biological role, negative regulator of class I heat shock genes (grpE-dnaK-dnaJ and groELS operons). Prevents heat-shock induction of these operons. This Streptococcus agalactiae serotype III (strain NEM316) protein is Heat-inducible transcription repressor HrcA.